A 491-amino-acid polypeptide reads, in one-letter code: Cobyric acid synthase (491 aa).

The region spanning 253 to 429 (AHRVAVVRLP…WHGSLEGDAL (177 aa)) is the GATase cobBQ-type domain. Cys334 serves as the catalytic Nucleophile. His421 is a catalytic residue.

Belongs to the CobB/CobQ family. CobQ subfamily.

The protein operates within cofactor biosynthesis; adenosylcobalamin biosynthesis. Functionally, catalyzes amidations at positions B, D, E, and G on adenosylcobyrinic A,C-diamide. NH(2) groups are provided by glutamine, and one molecule of ATP is hydrogenolyzed for each amidation. The polypeptide is Cobyric acid synthase (Mycobacterium ulcerans (strain Agy99)).